The chain runs to 163 residues: Phosphopantetheine adenylyltransferase (163 aa).

Ser10 provides a ligand contact to substrate. ATP contacts are provided by residues Ser10–Phe11 and His18. Positions 42, 78, and 92 each coordinate substrate. ATP contacts are provided by residues Gly93–Arg95, Glu103, and His127–Ser133.

It belongs to the bacterial CoaD family. Homohexamer. It depends on Mg(2+) as a cofactor.

It localises to the cytoplasm. The catalysed reaction is (R)-4'-phosphopantetheine + ATP + H(+) = 3'-dephospho-CoA + diphosphate. Its pathway is cofactor biosynthesis; coenzyme A biosynthesis; CoA from (R)-pantothenate: step 4/5. Its function is as follows. Reversibly transfers an adenylyl group from ATP to 4'-phosphopantetheine, yielding dephospho-CoA (dPCoA) and pyrophosphate. The sequence is that of Phosphopantetheine adenylyltransferase from Clavibacter michiganensis subsp. michiganensis (strain NCPPB 382).